Consider the following 259-residue polypeptide: Hydroxyacylglutathione hydrolase (259 aa).

H56, H58, D60, H61, H112, D133, and H171 together coordinate Zn(2+).

This sequence belongs to the metallo-beta-lactamase superfamily. Glyoxalase II family. Monomer. The cofactor is Zn(2+).

It catalyses the reaction an S-(2-hydroxyacyl)glutathione + H2O = a 2-hydroxy carboxylate + glutathione + H(+). It functions in the pathway secondary metabolite metabolism; methylglyoxal degradation; (R)-lactate from methylglyoxal: step 2/2. Functionally, thiolesterase that catalyzes the hydrolysis of S-D-lactoyl-glutathione to form glutathione and D-lactic acid. This chain is Hydroxyacylglutathione hydrolase, found in Pseudomonas putida (strain GB-1).